A 169-amino-acid polypeptide reads, in one-letter code: Crossover junction endodeoxyribonuclease RuvC (169 aa).

Catalysis depends on residues aspartate 13, glutamate 73, and aspartate 145. Residues aspartate 13, glutamate 73, and aspartate 145 each coordinate Mg(2+).

This sequence belongs to the RuvC family. In terms of assembly, homodimer which binds Holliday junction (HJ) DNA. The HJ becomes 2-fold symmetrical on binding to RuvC with unstacked arms; it has a different conformation from HJ DNA in complex with RuvA. In the full resolvosome a probable DNA-RuvA(4)-RuvB(12)-RuvC(2) complex forms which resolves the HJ. It depends on Mg(2+) as a cofactor.

It localises to the cytoplasm. It carries out the reaction Endonucleolytic cleavage at a junction such as a reciprocal single-stranded crossover between two homologous DNA duplexes (Holliday junction).. Its function is as follows. The RuvA-RuvB-RuvC complex processes Holliday junction (HJ) DNA during genetic recombination and DNA repair. Endonuclease that resolves HJ intermediates. Cleaves cruciform DNA by making single-stranded nicks across the HJ at symmetrical positions within the homologous arms, yielding a 5'-phosphate and a 3'-hydroxyl group; requires a central core of homology in the junction. The consensus cleavage sequence is 5'-(A/T)TT(C/G)-3'. Cleavage occurs on the 3'-side of the TT dinucleotide at the point of strand exchange. HJ branch migration catalyzed by RuvA-RuvB allows RuvC to scan DNA until it finds its consensus sequence, where it cleaves and resolves the cruciform DNA. The protein is Crossover junction endodeoxyribonuclease RuvC of Solidesulfovibrio magneticus (strain ATCC 700980 / DSM 13731 / RS-1) (Desulfovibrio magneticus).